A 207-amino-acid chain; its full sequence is Dephospho-CoA kinase (207 aa).

Residues 1-11 (MTRSPAPSSPT) are compositionally biased toward polar residues. The interval 1-21 (MTRSPAPSSPTHPRRLGLTGS) is disordered. In terms of domain architecture, DPCK spans 15–207 (RLGLTGSIGA…DAALRQLEIT (193 aa)). Position 23 to 28 (23 to 28 (GAGKST)) interacts with ATP.

The protein belongs to the CoaE family.

The protein resides in the cytoplasm. The catalysed reaction is 3'-dephospho-CoA + ATP = ADP + CoA + H(+). It functions in the pathway cofactor biosynthesis; coenzyme A biosynthesis; CoA from (R)-pantothenate: step 5/5. Functionally, catalyzes the phosphorylation of the 3'-hydroxyl group of dephosphocoenzyme A to form coenzyme A. In Deinococcus radiodurans (strain ATCC 13939 / DSM 20539 / JCM 16871 / CCUG 27074 / LMG 4051 / NBRC 15346 / NCIMB 9279 / VKM B-1422 / R1), this protein is Dephospho-CoA kinase.